Here is a 320-residue protein sequence, read N- to C-terminus: F-box protein At2g02240 (320 aa).

An F-box domain is found at 58 to 104 (TSPFDVLPEDCISNIISFTSPRDACVAASVSKTFESAVSSDCVWDKF).

This chain is F-box protein At2g02240, found in Arabidopsis thaliana (Mouse-ear cress).